A 240-amino-acid chain; its full sequence is Ribosomal RNA small subunit methyltransferase I (240 aa).

The protein belongs to the methyltransferase superfamily. RsmI family.

Its subcellular location is the cytoplasm. The enzyme catalyses cytidine(1402) in 16S rRNA + S-adenosyl-L-methionine = 2'-O-methylcytidine(1402) in 16S rRNA + S-adenosyl-L-homocysteine + H(+). Its function is as follows. Catalyzes the 2'-O-methylation of the ribose of cytidine 1402 (C1402) in 16S rRNA. In Leptospira biflexa serovar Patoc (strain Patoc 1 / ATCC 23582 / Paris), this protein is Ribosomal RNA small subunit methyltransferase I.